The sequence spans 429 residues: Enolase 2 (429 aa).

Residue glutamine 163 coordinates (2R)-2-phosphoglycerate. Glutamate 205 (proton donor) is an active-site residue. Mg(2+) contacts are provided by aspartate 242, glutamate 286, and aspartate 313. (2R)-2-phosphoglycerate contacts are provided by lysine 338, arginine 367, serine 368, and lysine 389. Lysine 338 (proton acceptor) is an active-site residue.

It belongs to the enolase family. Requires Mg(2+) as cofactor.

The protein resides in the cytoplasm. Its subcellular location is the secreted. It is found in the cell surface. The catalysed reaction is (2R)-2-phosphoglycerate = phosphoenolpyruvate + H2O. It participates in carbohydrate degradation; glycolysis; pyruvate from D-glyceraldehyde 3-phosphate: step 4/5. In terms of biological role, catalyzes the reversible conversion of 2-phosphoglycerate (2-PG) into phosphoenolpyruvate (PEP). It is essential for the degradation of carbohydrates via glycolysis. This Lactiplantibacillus plantarum (strain ATCC BAA-793 / NCIMB 8826 / WCFS1) (Lactobacillus plantarum) protein is Enolase 2.